The chain runs to 274 residues: 2,3,4,5-tetrahydropyridine-2,6-dicarboxylate N-succinyltransferase (274 aa).

Substrate is bound by residues arginine 104 and aspartate 141.

It belongs to the transferase hexapeptide repeat family. In terms of assembly, homotrimer.

The protein resides in the cytoplasm. The catalysed reaction is (S)-2,3,4,5-tetrahydrodipicolinate + succinyl-CoA + H2O = (S)-2-succinylamino-6-oxoheptanedioate + CoA. It participates in amino-acid biosynthesis; L-lysine biosynthesis via DAP pathway; LL-2,6-diaminopimelate from (S)-tetrahydrodipicolinate (succinylase route): step 1/3. This chain is 2,3,4,5-tetrahydropyridine-2,6-dicarboxylate N-succinyltransferase, found in Wigglesworthia glossinidia brevipalpis.